We begin with the raw amino-acid sequence, 455 residues long: Putative PTS system EIIBC component YbbF (455 aa).

The 83-residue stretch at 8–90 folds into the PTS EIIB type-1 domain; that stretch reads HHLAQKILEL…SKLVSAEEGA (83 aa). The active-site Phosphocysteine intermediate; for EIIB activity is cysteine 30. Residues 116 to 455 enclose the PTS EIIC type-1 domain; it reads RKIASIFIPL…YKDEMASQFD (340 aa). 10 helical membrane-spanning segments follow: residues 118 to 138, 154 to 174, 181 to 201, 210 to 230, 250 to 270, 281 to 301, 325 to 345, 355 to 375, 399 to 419, and 423 to 443; these read IASI…ITGI, IAII…ILVG, FGGT…PEIA, LLPG…IAYT, VSLL…GGFI, ILDI…LPLV, LLPI…AVFV, AIAG…IFGV, YFQV…FLVL, and IILY…LTYA.

Its subcellular location is the cell membrane. In terms of biological role, the phosphoenolpyruvate-dependent sugar phosphotransferase system (sugar PTS), a major carbohydrate active -transport system, catalyzes the phosphorylation of incoming sugar substrates concomitantly with their translocation across the cell membrane. This Bacillus subtilis (strain 168) protein is Putative PTS system EIIBC component YbbF (ybbF).